We begin with the raw amino-acid sequence, 343 residues long: Cell cycle control protein 50C (343 aa).

Residues 1-34 are Cytoplasmic-facing; that stretch reads MKRKCQDYESRLPDNTAVKQQQLPAFRLQLTASE. Residues 35 to 55 form a helical membrane-spanning segment; that stretch reads ILSGFFAIGLFCLGMGIILLL. At 56 to 306 the chain is on the extracellular side; that stretch reads SAKSIKEVEI…STLTWSGGSS (251 aa). N-linked (GlcNAc...) asparagine glycosylation is found at Asn-66, Asn-164, Asn-205, and Asn-265. A helical membrane pass occupies residues 307 to 327; sequence LFLALAYLVTGAVTLLASFSM. The Cytoplasmic segment spans residues 328–343; sequence MALHLKLKERKTFFLQ.

It belongs to the CDC50/LEM3 family.

It localises to the membrane. The polypeptide is Cell cycle control protein 50C (TMEM30C) (Bos taurus (Bovine)).